Here is a 417-residue protein sequence, read N- to C-terminus: Gamma-glutamyl phosphate reductase (417 aa).

The protein belongs to the gamma-glutamyl phosphate reductase family.

It is found in the cytoplasm. It carries out the reaction L-glutamate 5-semialdehyde + phosphate + NADP(+) = L-glutamyl 5-phosphate + NADPH + H(+). It functions in the pathway amino-acid biosynthesis; L-proline biosynthesis; L-glutamate 5-semialdehyde from L-glutamate: step 2/2. Its function is as follows. Catalyzes the NADPH-dependent reduction of L-glutamate 5-phosphate into L-glutamate 5-semialdehyde and phosphate. The product spontaneously undergoes cyclization to form 1-pyrroline-5-carboxylate. In Escherichia coli O81 (strain ED1a), this protein is Gamma-glutamyl phosphate reductase.